The chain runs to 205 residues: CASP-like protein 2A1 (205 aa).

Residues 1 to 25 (MDKSKVSTAVGGETPVGLITGSRDD) are disordered. At 1 to 34 (MDKSKVSTAVGGETPVGLITGSRDDELESGSMRT) the chain is on the cytoplasmic side. A helical membrane pass occupies residues 35–55 (AETVLRLVPMAFCISALVLML). Over 56-76 (KNSQTNDFGTLSYSDLGAFRY) the chain is Extracellular. Residues 77-97 (LVHANGICAGYSLLSAIIVAM) traverse the membrane as a helical segment. At 98 to 105 (PRPSTMSR) the chain is on the cytoplasmic side. The chain crosses the membrane as a helical span at residues 106–126 (AWTFFFLDQVLTYVILAAAAV). Over 127 to 156 (SVEALYLARKGDIAITWSAACVSFGGFCHK) the chain is Extracellular. The chain crosses the membrane as a helical span at residues 157–177 (AITSAVITFIVVVCYALLSLV). Over 178–205 (SSYKLFSRYGAPDVSYPGKGIEVAAFHS) the chain is Cytoplasmic.

Belongs to the Casparian strip membrane proteins (CASP) family. In terms of assembly, homodimer and heterodimers.

The protein localises to the cell membrane. In Ricinus communis (Castor bean), this protein is CASP-like protein 2A1.